The primary structure comprises 79 residues: MTKEQILVDVQEAIAEKLGKEQSEITLDKSFKDDLGADSLEVMELVMDLEDKFEITIEDDQAENLKTVGDVVSYIETQV.

A Carrier domain is found at 1–79; that stretch reads MTKEQILVDV…DVVSYIETQV (79 aa). O-(pantetheine 4'-phosphoryl)serine is present on Ser-39.

It belongs to the acyl carrier protein (ACP) family. 4'-phosphopantetheine is transferred from CoA to a specific serine of apo-ACP by AcpS. This modification is essential for activity because fatty acids are bound in thioester linkage to the sulfhydryl of the prosthetic group.

The protein localises to the cytoplasm. It functions in the pathway lipid metabolism; fatty acid biosynthesis. In terms of biological role, carrier of the growing fatty acid chain in fatty acid biosynthesis. The chain is Acyl carrier protein from Exiguobacterium sibiricum (strain DSM 17290 / CCUG 55495 / CIP 109462 / JCM 13490 / 255-15).